The chain runs to 1496 residues: Chromosome partition protein MukB (1496 aa).

63–70 (GGNGAGKS) is an ATP binding site. 2 coiled-coil regions span residues 328-493 (KLEL…QRLS) and 536-632 (KMQA…APAW). The flexible hinge stretch occupies residues 694-811 (PDGSDDVRLN…EVPLFGRAAR (118 aa)). 2 coiled-coil regions span residues 861–1171 (NPEE…SAEE) and 1235–1291 (IDAI…LQNI). Over residues 1082–1091 (RARSRRDELQ) the composition is skewed to basic and acidic residues. A disordered region spans residues 1082–1101 (RARSRRDELQQRLSQQRSRK).

Belongs to the SMC family. MukB subfamily. Homodimerization via its hinge domain. Binds to DNA via its C-terminal region. Interacts, and probably forms a ternary complex, with MukE and MukF via its C-terminal region. The complex formation is stimulated by calcium or magnesium. Interacts with tubulin-related protein FtsZ.

It is found in the cytoplasm. The protein resides in the nucleoid. Its function is as follows. Plays a central role in chromosome condensation, segregation and cell cycle progression. Functions as a homodimer, which is essential for chromosome partition. Involved in negative DNA supercoiling in vivo, and by this means organize and compact chromosomes. May achieve or facilitate chromosome segregation by condensation DNA from both sides of a centrally located replisome during cell division. The protein is Chromosome partition protein MukB of Actinobacillus pleuropneumoniae serotype 7 (strain AP76).